We begin with the raw amino-acid sequence, 598 residues long: Acetylcholine receptor subunit alpha-type acr-5 (598 aa).

The signal sequence occupies residues 1–16; it reads MLPNIILILLIRYCSC. Topologically, residues 17-323 are extracellular; that stretch reads GAGSRVYEKY…HLVIRRKPLY (307 aa). N-linked (GlcNAc...) asparagine glycosylation is found at N54, N71, N77, N134, N178, and N252. The chain crosses the membrane as a helical span at residues 324–344; the sequence is YMINLVVPTSIITIVAVTGFF. Residues 345–356 are Cytoplasmic-facing; it reads TPTSSSSERDEK. Residues 357–377 form a helical membrane-spanning segment; sequence LYLGINTLLTMSVMMLMVCNQ. Over 378-391 the chain is Extracellular; that stretch reads MPSTSTYVPLMSWY. The chain crosses the membrane as a helical span at residues 392-412; the sequence is YIGIIMVIVVGTFLATGVLAI. Residues 413–563 are Cytoplasmic-facing; sequence HGQKHYNKPI…WEFLANVLDR (151 aa). The chain crosses the membrane as a helical span at residues 564–584; sequence ILLTIFCGFTFAVFIILIGFD. The Extracellular portion of the chain corresponds to 585–598; sequence SFFTFHTDSPPKTM.

It belongs to the ligand-gated ion channel (TC 1.A.9) family. Acetylcholine receptor (TC 1.A.9.1) subfamily.

It is found in the postsynaptic cell membrane. Its subcellular location is the cell membrane. In terms of biological role, subunit of nicotinic acetylcholine receptor (nAChR). Involved in nAChR sensitivity to nicotine. Modulates locomotion towards the drug nicotine. The protein is Acetylcholine receptor subunit alpha-type acr-5 of Caenorhabditis elegans.